Consider the following 319-residue polypeptide: 12-(S)-hydroxy-5,8,10,14-eicosatetraenoic acid receptor (319 aa).

Over 1–16 (MPFPNCSAPSTVVATA) the chain is Extracellular. N-linked (GlcNAc...) asparagine glycosylation is present at Asn-5. A helical transmembrane segment spans residues 17-37 (VGVLLGLECGLGLLGNAVALW). At 38-52 (TFLFRVRVWKPYAVY) the chain is on the cytoplasmic side. The chain crosses the membrane as a helical span at residues 53-73 (LLNLALADLLLAACLPFLAAF). The Extracellular segment spans residues 74-91 (YLSLQAWHLGRVGCWALH). The helical transmembrane segment at 92-110 (FLLDLSRSVGMAFLAAVAL) threads the bilayer. The Cytoplasmic segment spans residues 111-131 (DRYLRVVHPRLKVNLLSPQAA). Residues 132-152 (LGVSGLVWLLMVALTCPGLLI) form a helical membrane-spanning segment. Residues 153–180 (SEAAQNSTRCHSFYSRADGSFSIIWQEA) lie on the Extracellular side of the membrane. A helical membrane pass occupies residues 181–201 (LSCLQFVLPFGLIVFCNAGII). Residues 202–219 (RALQKRLREPEKQPKLQR) are Cytoplasmic-facing. Residues 220 to 240 (AQALVTLVVVLFALCFLPCFL) form a helical membrane-spanning segment. Topologically, residues 241 to 265 (ARVLMHIFQNLGSCRALCAVAHTSD) are extracellular. A helical transmembrane segment spans residues 266–284 (VTGSLTYLHSVLNPVVYCF). Residues 285 to 319 (SSPTFRSSYRRVFHTLRGKGQAAEPPDFNPRDSYS) lie on the Cytoplasmic side of the membrane.

This sequence belongs to the G-protein coupled receptor 1 family. In terms of assembly, interacts with KRAS; in a farnesylation-dependent manner.

It is found in the cell membrane. Its function is as follows. High-affinity receptor for 12-(S)-hydroxy-5,8,10,14-eicosatetraenoic acid (12-S-HETE), with much lower affinities for other HETE isomers. 12-S-HETE is a eicosanoid, a 12-lipoxygenase (ALOX12) metabolite of arachidonic acid, involved in many physiologic and pathologic processes. 12-S-HETE-binding leads to activation of ERK1/2 (MAPK3/MAPK1), MEK, and NF-kappa-B pathways leading to cell growth. Plays a crucial role for proliferation, survival and macropinocytosis of KRAS-dependent cancer cells by mediating the translocation of KRAS from the endoplasmic reticulum to the plasma membrane (PM) and its association with the PM. Contributes to enhanced immune responses by inducing dendrite protrusion of small intestinal CX3CR1(+) phagocytes for the uptake of luminal antigens. Acts also as a key receptor for 12-(S)-HETE-mediated liver ischemia reperfusion injury. Proton-sensing G protein-coupled receptor. This chain is 12-(S)-hydroxy-5,8,10,14-eicosatetraenoic acid receptor (GPR31), found in Homo sapiens (Human).